The sequence spans 380 residues: Actin-like protein arp10 (380 aa).

Belongs to the actin family. ARP10 subfamily.

The protein localises to the cytoplasm. Its subcellular location is the cytoskeleton. The protein resides in the nucleus. The protein is Actin-like protein arp10 (arp10) of Schizosaccharomyces pombe (strain 972 / ATCC 24843) (Fission yeast).